We begin with the raw amino-acid sequence, 570 residues long: MSDSKPRDVQVLPIATNTKVLRARSWSRLRFEIEYALERGTTSNSYVIEGDKTAIIDPPVESFMKIYLEALQQTVNLKKLDYVILGHFSPNRIPTFKALLELAPQITFVCSLPAAGDLRAAFPDDNLNILPMRGKETLDLGKGHVLKFLPIPSPRWPAGLCTYDVQTQILYTDKIFGAHICGDDVFDDNWESFKEDQRYYFNCLMAPHAIHVEAALEKISDLQVRLYAVGHGPLVRTSLIALTQAYADWSKAQKDREISVALLYASAYGNTATIARAIALGLTKGGVAVKSINCEFATPEEIQTNLEQVDGFLIGSPTIGGHAPTPINTALGIVLKVGDNNKLAGVFGSYGWSGEALDMIEGKLRDAGYRFGLDTLKVKFKPDDVTLKFCEEVGTDFAQTLKKAKKVRVPQQAATPVEQAVGRIVGSVCVITAKQGDVSTGMLGSWVSQATFNPPGLTVAIAKERAIESLMYPGGKFALNILSEGNHLEYMKHFRKNFAPGEDRFANFTTTEADNGCTVLADALAYVECSVDQRLECGDHWVVYATVDNGKLLKPDDVTAINHRKTGNHY.

The tract at residues glutamate 38–histidine 231 is zinc metallo-hydrolase. One can recognise a Flavodoxin-like domain in the interval valine 260–lysine 402. The flavodoxin-reductase-like stretch occupies residues valine 421–tyrosine 570.

In the N-terminal section; belongs to the zinc metallo-hydrolase group 3 family. It in the C-terminal section; belongs to the flavodoxin reductase family. It depends on Fe cation as a cofactor.

Mediates electron transfer from NADH to oxygen, reducing it to water. This modular protein has 3 redox cofactors, in other organisms the same activity requires 2 or 3 proteins. The chain is Putative diflavin flavoprotein A 5 (dfa5) from Nostoc sp. (strain PCC 7120 / SAG 25.82 / UTEX 2576).